The primary structure comprises 336 residues: Anthranilate phosphoribosyltransferase (336 aa).

Residues Gly-82, 85–86, Thr-90, 92–95, 110–118, and Ser-122 contribute to the 5-phospho-alpha-D-ribose 1-diphosphate site; these read GD, NIST, and KHGNRSVSS. Residue Gly-82 coordinates anthranilate. Residue Ser-94 coordinates Mg(2+). An anthranilate-binding site is contributed by Asn-113. Arg-168 contributes to the anthranilate binding site. Asp-227 and Glu-228 together coordinate Mg(2+).

It belongs to the anthranilate phosphoribosyltransferase family. In terms of assembly, homodimer. It depends on Mg(2+) as a cofactor.

The catalysed reaction is N-(5-phospho-beta-D-ribosyl)anthranilate + diphosphate = 5-phospho-alpha-D-ribose 1-diphosphate + anthranilate. The protein operates within amino-acid biosynthesis; L-tryptophan biosynthesis; L-tryptophan from chorismate: step 2/5. In terms of biological role, catalyzes the transfer of the phosphoribosyl group of 5-phosphorylribose-1-pyrophosphate (PRPP) to anthranilate to yield N-(5'-phosphoribosyl)-anthranilate (PRA). The chain is Anthranilate phosphoribosyltransferase from Leptospira interrogans serogroup Icterohaemorrhagiae serovar Lai (strain 56601).